We begin with the raw amino-acid sequence, 337 residues long: B3 domain-containing protein REM16 (337 aa).

DNA-binding regions (TF-B3) lie at residues 22-116 and 223-321; these read TLHF…FDGQ and FLVF…FRGE.

The protein resides in the nucleus. The protein is B3 domain-containing protein REM16 (REM16) of Arabidopsis thaliana (Mouse-ear cress).